The sequence spans 352 residues: ATP synthase subunit a 2 (352 aa).

The signal sequence occupies residues 1 to 26; sequence MRKKAISRILALVVPVLLSLNSQAFA. The next 7 helical transmembrane spans lie at 112-132, 172-192, 195-215, 232-252, 264-284, 289-309, and 310-330; these read VVMI…AGAS, FLPY…LGLI, GATA…TFVI, HLTA…EILG, LFAN…ISFI, IVAV…ELFV, and AFLQ…LATA.

The protein belongs to the ATPase A chain family. As to quaternary structure, F-type ATPases have 2 components, CF(1) - the catalytic core - and CF(0) - the membrane proton channel. CF(1) has five subunits: alpha(3), beta(3), gamma(1), delta(1), epsilon(1). CF(0) has four main subunits: a, b, b' and c.

The protein localises to the cell inner membrane. Key component of the proton channel; it plays a direct role in the translocation of protons across the membrane. This chain is ATP synthase subunit a 2, found in Chlorobaculum tepidum (strain ATCC 49652 / DSM 12025 / NBRC 103806 / TLS) (Chlorobium tepidum).